The sequence spans 532 residues: uncharacterized protein (532 aa).

The next 6 helical transmembrane spans lie at 7-26, 30-52, 59-77, 87-109, 116-134, and 139-161; these read HSSY…LGRI, GLSL…GVII, FGLV…PGFF, LIII…KYAF, VVGL…AVAI, and SPLA…ILFV. RCK C-terminal domains follow at residues 179-262 and 263-346; these read LEIE…LVGE and REEG…LLGN. 4 consecutive transmembrane segments (helical) span residues 356-378, 388-410, 446-468, and 509-531; these read FFPI…SFPG, GGVL…LWSM, GLLL…AFVG, and YATV…ATVV.

The protein belongs to the AAE transporter (TC 2.A.81) family.

The protein resides in the cell membrane. This is an uncharacterized protein from Bacteroides fragilis (strain YCH46).